Consider the following 501-residue polypeptide: Lysine--tRNA ligase (501 aa).

Residues Glu-411 and Glu-418 each coordinate Mg(2+).

Belongs to the class-II aminoacyl-tRNA synthetase family. Homodimer. Mg(2+) is required as a cofactor.

The protein resides in the cytoplasm. The catalysed reaction is tRNA(Lys) + L-lysine + ATP = L-lysyl-tRNA(Lys) + AMP + diphosphate. In Magnetococcus marinus (strain ATCC BAA-1437 / JCM 17883 / MC-1), this protein is Lysine--tRNA ligase.